Here is a 212-residue protein sequence, read N- to C-terminus: Holliday junction branch migration complex subunit RuvA (212 aa).

The domain I stretch occupies residues 1-70 (MISYLKGSPI…EDQQILYGFS (70 aa)). The interval 71-149 (TTAERELFRQ…QWRKMVGVTV (79 aa)) is domain II. The flexible linker stretch occupies residues 150–160 (TSSAAMPSLEI). Positions 160–212 (ILEDIEMTLLALGYTNEEINKAISTLSQDNLMLKNTNTEEWIKEAIAWLSQGT) are domain III.

Belongs to the RuvA family. In terms of assembly, homotetramer. Forms an RuvA(8)-RuvB(12)-Holliday junction (HJ) complex. HJ DNA is sandwiched between 2 RuvA tetramers; dsDNA enters through RuvA and exits via RuvB. An RuvB hexamer assembles on each DNA strand where it exits the tetramer. Each RuvB hexamer is contacted by two RuvA subunits (via domain III) on 2 adjacent RuvB subunits; this complex drives branch migration. In the full resolvosome a probable DNA-RuvA(4)-RuvB(12)-RuvC(2) complex forms which resolves the HJ.

It localises to the cytoplasm. In terms of biological role, the RuvA-RuvB-RuvC complex processes Holliday junction (HJ) DNA during genetic recombination and DNA repair, while the RuvA-RuvB complex plays an important role in the rescue of blocked DNA replication forks via replication fork reversal (RFR). RuvA specifically binds to HJ cruciform DNA, conferring on it an open structure. The RuvB hexamer acts as an ATP-dependent pump, pulling dsDNA into and through the RuvAB complex. HJ branch migration allows RuvC to scan DNA until it finds its consensus sequence, where it cleaves and resolves the cruciform DNA. The polypeptide is Holliday junction branch migration complex subunit RuvA (Crocosphaera subtropica (strain ATCC 51142 / BH68) (Cyanothece sp. (strain ATCC 51142))).